The chain runs to 101 residues: MLVLFVLSLVVSCALCQTFQYSRGWTNGKRSNFPAEISALGYDRFTNGELKRLKMLIYGSADEQPLLIHCDFVDKLKKFAHTDNAEPDQLRREKAPNNDNY.

Positions 1–16 (MLVLFVLSLVVSCALC) are cleaved as a signal peptide. Position 27 is an asparagine amide (N27). The propeptide occupies 31–101 (SNFPAEISAL…REKAPNNDNY (71 aa)).

This sequence belongs to the corazonin family. In terms of tissue distribution, expressed in central brain and the retrocerebral complex but not in antennal lobes, optic lobes or in gnathal, thoracic and abdominal ganglia (at protein level).

It localises to the secreted. Functionally, cardioactive peptide. Corazonin is probably involved in the physiological regulation of the heart beat. In Camponotus floridanus (Florida carpenter ant), this protein is Pro-corazonin.